The following is a 1192-amino-acid chain: Coiled-coil domain-containing protein 40 (1192 aa).

Disordered regions lie at residues 1–78 (MMDA…PGMD), 126–153 (KAKH…LEVS), 173–196 (SSPE…NVSA), 211–246 (EPIE…YQRD), and 261–289 (GSLT…STPR). Positions 27–45 (PETEVEFIGETAPDTDVEF) are enriched in acidic residues. Pro residues predominate over residues 215-228 (PTEPPEPAEPPKPA). Residues 267-279 (DTDDLPLETDEPP) show a composition bias toward acidic residues. Ser306 is modified (phosphoserine). Coiled coils occupy residues 308-369 (EALL…ATKQ), 425-451 (KTCQ…ALHL), 581-649 (DSEI…MLNK), 733-768 (NTNC…EIAR), 830-871 (LQQE…KIAH), 919-972 (LRTL…EMRS), and 1044-1118 (QQRE…IVTL).

The protein belongs to the CCDC40 family. As to expression, specifically expressed in the embryonic node and midline.

It is found in the cytoplasm. It localises to the cell projection. Its subcellular location is the cilium. Required for assembly of dynein regulatory complex (DRC) and inner dynein arm (IDA) complexes, which are responsible for ciliary beat regulation, thereby playing a central role in motility in cilia and flagella. Probably acts together with CCDC39 to form a molecular ruler that determines the 96 nanometer (nm) repeat length and arrangements of components in cilia and flagella. Not required for outer dynein arm complexes assembly. Required for axonemal recruitment of CCDC39. This Mus musculus (Mouse) protein is Coiled-coil domain-containing protein 40.